A 671-amino-acid chain; its full sequence is NADPH--cytochrome P450 reductase (671 aa).

At 1–14 (MSAEHVEEVVSEEP) the chain is on the lumenal side. Residues 15-35 (FLGTLDIALLVVLLVGATWYF) form a helical membrane-spanning segment. At 36–671 (MRSRKKEEAP…QKRYSADVWS (636 aa)) the chain is on the cytoplasmic side. Residues 77–221 (LVVFYGSQTG…DFITWKDRFW (145 aa)) enclose the Flavodoxin-like domain. FMN-binding positions include 83–88 (SQTGTA), 135–138 (ATYG), 170–179 (LGNKTYEHYN), and D205. The FAD-binding FR-type domain occupies 276 to 515 (KNPFLASVIV…FIRKSQFRLP (240 aa)). R295 contacts NADP(+). FAD is bound by residues 451–454 (RYYS), 469–471 (TAV), Y475, and 485–488 (GVAT). NADP(+) is bound by residues T529, 589 to 590 (SR), 595 to 599 (KIYVT), and D632. Residue W670 coordinates FAD.

The protein belongs to the NADPH--cytochrome P450 reductase family. This sequence in the N-terminal section; belongs to the flavodoxin family. It in the C-terminal section; belongs to the flavoprotein pyridine nucleotide cytochrome reductase family. FAD serves as cofactor. Requires FMN as cofactor.

The protein localises to the endoplasmic reticulum membrane. It carries out the reaction 2 oxidized [cytochrome P450] + NADPH = 2 reduced [cytochrome P450] + NADP(+) + H(+). This enzyme is required for electron transfer from NADP to cytochrome P450 in microsomes. It can also provide electron transfer to heme oxygenase and cytochrome B5. This chain is NADPH--cytochrome P450 reductase, found in Musca domestica (House fly).